We begin with the raw amino-acid sequence, 872 residues long: Alanine--tRNA ligase (872 aa).

Residues histidine 563, histidine 567, cysteine 665, and histidine 669 each coordinate Zn(2+).

The protein belongs to the class-II aminoacyl-tRNA synthetase family. The cofactor is Zn(2+).

It is found in the cytoplasm. The enzyme catalyses tRNA(Ala) + L-alanine + ATP = L-alanyl-tRNA(Ala) + AMP + diphosphate. In terms of biological role, catalyzes the attachment of alanine to tRNA(Ala) in a two-step reaction: alanine is first activated by ATP to form Ala-AMP and then transferred to the acceptor end of tRNA(Ala). Also edits incorrectly charged Ser-tRNA(Ala) and Gly-tRNA(Ala) via its editing domain. The sequence is that of Alanine--tRNA ligase from Bacteroides fragilis (strain YCH46).